The primary structure comprises 355 residues: Cobalt-precorrin-5B C(1)-methyltransferase (355 aa).

This sequence belongs to the CbiD family.

It carries out the reaction Co-precorrin-5B + S-adenosyl-L-methionine = Co-precorrin-6A + S-adenosyl-L-homocysteine. It functions in the pathway cofactor biosynthesis; adenosylcobalamin biosynthesis; cob(II)yrinate a,c-diamide from sirohydrochlorin (anaerobic route): step 6/10. In terms of biological role, catalyzes the methylation of C-1 in cobalt-precorrin-5B to form cobalt-precorrin-6A. This chain is Cobalt-precorrin-5B C(1)-methyltransferase, found in Sulfolobus acidocaldarius (strain ATCC 33909 / DSM 639 / JCM 8929 / NBRC 15157 / NCIMB 11770).